The primary structure comprises 151 residues: U1 small nuclear ribonucleoprotein C (151 aa).

A Matrin-type zinc finger spans residues 4-36; sequence YYCDYCDTYLTHDSPSVRKTHCTGRKHKDNVKF.

The protein belongs to the U1 small nuclear ribonucleoprotein C family. U1 snRNP is composed of the 7 core Sm proteins B/B', D1, D2, D3, E, F and G that assemble in a heptameric protein ring on the Sm site of the small nuclear RNA to form the core snRNP, and at least 3 U1 snRNP-specific proteins U1-70K, U1-A and U1-C. U1-C interacts with U1 snRNA and the 5' splice-site region of the pre-mRNA.

The protein resides in the nucleus. Component of the spliceosomal U1 snRNP, which is essential for recognition of the pre-mRNA 5' splice-site and the subsequent assembly of the spliceosome. U1-C is directly involved in initial 5' splice-site recognition for both constitutive and regulated alternative splicing. The interaction with the 5' splice-site seems to precede base-pairing between the pre-mRNA and the U1 snRNA. Stimulates commitment or early (E) complex formation by stabilizing the base pairing of the 5' end of the U1 snRNA and the 5' splice-site region. The sequence is that of U1 small nuclear ribonucleoprotein C from Anopheles darlingi (Mosquito).